The sequence spans 453 residues: Ribulose bisphosphate carboxylase large chain (453 aa).

Residues 1–2 (MS) constitute a propeptide that is removed on maturation. The residue at position 3 (proline 3) is an N-acetylproline. An N6,N6,N6-trimethyllysine modification is found at lysine 14. Substrate-binding residues include asparagine 123 and threonine 173. Lysine 175 functions as the Proton acceptor in the catalytic mechanism. Residue lysine 177 participates in substrate binding. The Mg(2+) site is built by lysine 201, aspartate 203, and glutamate 204. Lysine 201 is modified (N6-carboxylysine). The active-site Proton acceptor is histidine 294. Substrate contacts are provided by arginine 295, histidine 327, and serine 379.

It belongs to the RuBisCO large chain family. Type I subfamily. In terms of assembly, heterohexadecamer of 8 large chains and 8 small chains; disulfide-linked. The disulfide link is formed within the large subunit homodimers. It depends on Mg(2+) as a cofactor. In terms of processing, the disulfide bond which can form in the large chain dimeric partners within the hexadecamer appears to be associated with oxidative stress and protein turnover.

Its subcellular location is the plastid. The protein resides in the chloroplast. The enzyme catalyses 2 (2R)-3-phosphoglycerate + 2 H(+) = D-ribulose 1,5-bisphosphate + CO2 + H2O. The catalysed reaction is D-ribulose 1,5-bisphosphate + O2 = 2-phosphoglycolate + (2R)-3-phosphoglycerate + 2 H(+). In terms of biological role, ruBisCO catalyzes two reactions: the carboxylation of D-ribulose 1,5-bisphosphate, the primary event in carbon dioxide fixation, as well as the oxidative fragmentation of the pentose substrate in the photorespiration process. Both reactions occur simultaneously and in competition at the same active site. This chain is Ribulose bisphosphate carboxylase large chain, found in Asperula laevigata (Smooth woodruff).